We begin with the raw amino-acid sequence, 765 residues long: BRCA1-associated RING domain protein 1 (765 aa).

Residues 20 to 113 (MEPATDGLWA…KLQNLLHDNK (94 aa)) are required for BRCA1 binding. Residues 44-81 (CSRCANILKEPVCLGGCEHIFCSGCISDCVGSGCPVCY) form an RING-type zinc finger. Lys-152 is covalently cross-linked (Glycyl lysine isopeptide (Lys-Gly) (interchain with G-Cter in SUMO2)). Disordered stretches follow at residues 183–229 (AVPK…EELK), 299–328 (KDLRSGGSNGNRKGCHRPTTSTSDSCGSNI), and 369–410 (NASD…MPAR). A compositionally biased stretch (basic residues) spans 195–204 (SAKKHPKKSV). The segment covering 207–229 (INREENLRPETKDSRFDSKEELK) has biased composition (basic and acidic residues). A compositionally biased stretch (polar residues) spans 316–328 (PTTSTSDSCGSNI). At Ser-378 the chain carries Phosphoserine. Thr-381 carries the post-translational modification Phosphothreonine. Positions 391 to 403 (HRQMMSSPSTVKL) are enriched in polar residues. A Glycyl lysine isopeptide (Lys-Gly) (interchain with G-Cter in SUMO2) cross-link involves residue Lys-411. ANK repeat units lie at residues 415–447 (RGETLLHIASIKGDIPSVEYLLQNGNDPNVKDH), 448–480 (AGWTPLHEACSHGHLKVVELLLQHNALVNTPGY), and 481–513 (QNDSPLHDAVKSGHIDIVKVLLSHGASRNAVNI). The ANK 4; degenerate repeat unit spans residues 514–534 (FGVRPVDYTDNENIRSLLLLP). Positions 542–546 (TSQCS) are flexible linker. 2 consecutive BRCT domains span residues 549–641 (NTGQ…KYEV) and 655–765 (LLPK…PLDS).

Homo- and heterodimer. Heterodimer (RING-type zinc finger) with BRCA1. Heterodimer (via ANK repeats and BRCT domains) with CSTF1/CSTF-50. Component of the BRCA1-A complex, at least composed of the BRCA1, BARD1, UIMC1/RAP80, ABRAXAS1, BRCC3/BRCC36, BABAM2 and BABAM1/NBA1. Interacts with UBXN1. In terms of processing, processed during apoptosis. The homodimer is more susceptible to proteolytic cleavage than the BARD1/BRCA1 heterodimer.

Its subcellular location is the nucleus. It is found in the cytoplasm. The enzyme catalyses S-ubiquitinyl-[E2 ubiquitin-conjugating enzyme]-L-cysteine + [acceptor protein]-L-lysine = [E2 ubiquitin-conjugating enzyme]-L-cysteine + N(6)-ubiquitinyl-[acceptor protein]-L-lysine.. It functions in the pathway protein modification; protein ubiquitination. In terms of biological role, E3 ubiquitin-protein ligase. The BRCA1-BARD1 heterodimer specifically mediates the formation of 'Lys-6'-linked polyubiquitin chains and coordinates a diverse range of cellular pathways such as DNA damage repair, ubiquitination and transcriptional regulation to maintain genomic stability. Plays a central role in the control of the cell cycle in response to DNA damage. Acts by mediating ubiquitin E3 ligase activity that is required for its tumor suppressor function. Also forms a heterodimer with CSTF1/CSTF-50 to modulate mRNA processing and RNAP II stability by inhibiting pre-mRNA 3' cleavage. In Mus musculus (Mouse), this protein is BRCA1-associated RING domain protein 1 (Bard1).